Here is a 579-residue protein sequence, read N- to C-terminus: PCNA-interacting partner (579 aa).

Positions 480 to 543 (TSFGNVHLDR…AKIPKKSNDS (64 aa)) are disordered. Residues 486–496 (HLDRSKNEKVS) show a composition bias toward basic and acidic residues.

This sequence belongs to the PARI family. As to quaternary structure, interacts with RAD51 and PCNA. Interacts with PARP1. Interacts with TASOR. Restricted to testis. Overexpressed in multiple cancer cells.

Its subcellular location is the cytoplasm. The protein localises to the nucleus. Its function is as follows. Required to suppress inappropriate homologous recombination, thereby playing a central role DNA repair and in the maintenance of genomic stability. Antagonizes homologous recombination by interfering with the formation of the RAD51-DNA homologous recombination structure. Binds single-strand DNA and poly(A) homopolymers. Positively regulate the poly(ADP-ribosyl)ation activity of PARP1; however such function may be indirect. In Homo sapiens (Human), this protein is PCNA-interacting partner (PARPBP).